A 391-amino-acid chain; its full sequence is 3-ketoacyl-CoA thiolase (391 aa).

Residue Cys-95 is the Acyl-thioester intermediate of the active site. Active-site proton acceptor residues include His-347 and Cys-377.

It belongs to the thiolase-like superfamily. Thiolase family. In terms of assembly, heterotetramer of two alpha chains (FadB) and two beta chains (FadA).

The protein localises to the cytoplasm. The catalysed reaction is an acyl-CoA + acetyl-CoA = a 3-oxoacyl-CoA + CoA. It functions in the pathway lipid metabolism; fatty acid beta-oxidation. In terms of biological role, catalyzes the final step of fatty acid oxidation in which acetyl-CoA is released and the CoA ester of a fatty acid two carbons shorter is formed. This is 3-ketoacyl-CoA thiolase from Pseudomonas syringae pv. tomato (strain ATCC BAA-871 / DC3000).